Reading from the N-terminus, the 250-residue chain is UPF0758 protein tlr1707 (250 aa).

The MPN domain occupies 116–239; it reads TIIDSPALAA…YQSLREITPL (124 aa). 3 residues coordinate Zn(2+): histidine 188, histidine 190, and aspartate 201. Positions 188-201 match the JAMM motif motif; that stretch reads HNHPSGNLSPSQAD.

The protein belongs to the UPF0758 family.

This is UPF0758 protein tlr1707 from Thermosynechococcus vestitus (strain NIES-2133 / IAM M-273 / BP-1).